The following is a 355-amino-acid chain: Phosphatidylinositol:ceramide inositolphosphotransferase (355 aa).

Residues 1-44 (MISYPFFSLSPPGLVPPPMAVPPVEMYSGSFWNRMRKPLPLRTQ) are Cytoplasmic-facing. The helical transmembrane segment at 45 to 65 (VIRFTVVFVIVSFILAVALQI) threads the bilayer. Residues 66 to 89 (THERMPDPKVTKPLPDLGFELLTK) are Extracellular-facing. The chain crosses the membrane as a helical span at residues 90–110 (ISFLSVVTDVLIAFLSSLSFF). Over 111–165 (TLWKLYLLHRHCVGSGEPELPCNIPGVSRFFLSVWLCKENCRIELRNVHTIAWIR) the chain is Cytoplasmic. Residues 166 to 186 (FITSYALLLLFRSLVIVMTSM) form a helical membrane-spanning segment. The Extracellular segment spans residues 187-205 (PTPVDKCQNPPKIENPVKN). A helical transmembrane segment spans residues 206-226 (VILTVLTAGGGSIHCGDLMYS). Residues 227 to 251 (GHTVILTLHLMFHWIYGAMVHWSFR) are Cytoplasmic-facing. Catalysis depends on residues histidine 228, histidine 271, and aspartate 275. The chain crosses the membrane as a helical span at residues 252–272 (PVVTVVAIFGYYCIVASRSHY). The Extracellular portion of the chain corresponds to 273-275 (TDD). A helical membrane pass occupies residues 276-296 (VLVAIYLTIATFIAVGHNADG). Over 297-355 (APWQLQLFIRWLPCCGANSREVTEDSQPVMVAFKSEAVDELRERDDSAGLSCEVSTNEV) the chain is Cytoplasmic.

Belongs to the sphingomyelin synthase family.

Its subcellular location is the membrane. Bidirectional lipid inositolphosphotransferase capable of converting phosphatidylinositol (PI) and ceramide to inositol-phosphorylceramide (IPC) and diacylglycerol (DAG) and vice versa. Direction is dependent on the relative concentrations of DAG and ceramide as phosphoinositol acceptors. Does not function strictly as a SM synthase. Essential for viability of the pathogenic bloodstream stage of this human protozoan parasite and, consequently, can be considered as potential drug target. The protein is Phosphatidylinositol:ceramide inositolphosphotransferase of Trypanosoma brucei brucei (strain 927/4 GUTat10.1).